The sequence spans 157 residues: Crossover junction endodeoxyribonuclease RuvC (157 aa).

Catalysis depends on residues D7, E67, and D140. Mg(2+)-binding residues include D7, E67, and D140.

Belongs to the RuvC family. As to quaternary structure, homodimer which binds Holliday junction (HJ) DNA. The HJ becomes 2-fold symmetrical on binding to RuvC with unstacked arms; it has a different conformation from HJ DNA in complex with RuvA. In the full resolvosome a probable DNA-RuvA(4)-RuvB(12)-RuvC(2) complex forms which resolves the HJ. Mg(2+) serves as cofactor.

The protein resides in the cytoplasm. The enzyme catalyses Endonucleolytic cleavage at a junction such as a reciprocal single-stranded crossover between two homologous DNA duplexes (Holliday junction).. Its function is as follows. The RuvA-RuvB-RuvC complex processes Holliday junction (HJ) DNA during genetic recombination and DNA repair. Endonuclease that resolves HJ intermediates. Cleaves cruciform DNA by making single-stranded nicks across the HJ at symmetrical positions within the homologous arms, yielding a 5'-phosphate and a 3'-hydroxyl group; requires a central core of homology in the junction. The consensus cleavage sequence is 5'-(A/T)TT(C/G)-3'. Cleavage occurs on the 3'-side of the TT dinucleotide at the point of strand exchange. HJ branch migration catalyzed by RuvA-RuvB allows RuvC to scan DNA until it finds its consensus sequence, where it cleaves and resolves the cruciform DNA. In Rickettsia typhi (strain ATCC VR-144 / Wilmington), this protein is Crossover junction endodeoxyribonuclease RuvC.